Consider the following 111-residue polypeptide: Ig kappa chain V-III region PC 7940 (111 aa).

Positions 1–23 (DIVLTQSPASLAVSLGQRATISC) are framework-1. Cysteines 23 and 92 form a disulfide. The tract at residues 24-38 (RASKSVSAFGYSYMH) is complementarity-determining-1. The framework-2 stretch occupies residues 39-53 (WYQQKPGQPPKLLIY). The segment at 54-60 (LASNLES) is complementarity-determining-2. Residues 61 to 92 (GVPARFSGSGSGTDFTLNIHPVEEEDAVTYYC) form a framework-3 region. A complementarity-determining-3 region spans residues 93–101 (QHSRELPPT). Residues 102–111 (FGGGTKLEIK) are framework-4.

In Mus musculus (Mouse), this protein is Ig kappa chain V-III region PC 7940.